Consider the following 421-residue polypeptide: Gamma-glutamyl phosphate reductase (421 aa).

It belongs to the gamma-glutamyl phosphate reductase family.

It localises to the cytoplasm. It carries out the reaction L-glutamate 5-semialdehyde + phosphate + NADP(+) = L-glutamyl 5-phosphate + NADPH + H(+). Its pathway is amino-acid biosynthesis; L-proline biosynthesis; L-glutamate 5-semialdehyde from L-glutamate: step 2/2. Its function is as follows. Catalyzes the NADPH-dependent reduction of L-glutamate 5-phosphate into L-glutamate 5-semialdehyde and phosphate. The product spontaneously undergoes cyclization to form 1-pyrroline-5-carboxylate. This Acinetobacter baumannii (strain AYE) protein is Gamma-glutamyl phosphate reductase.